Reading from the N-terminus, the 399-residue chain is Protein translocase subunit SecD (399 aa).

Helical transmembrane passes span isoleucine 7–proline 27, valine 239–valine 259, isoleucine 262–leucine 282, glycine 286–alanine 306, alanine 329–glycine 351, and glycine 357–leucine 381.

Belongs to the SecD/SecF family. SecD subfamily. In terms of assembly, forms a complex with SecF. Part of the essential Sec protein translocation apparatus which comprises SecA, SecYEG and auxiliary proteins SecDF. Other proteins may also be involved.

The protein resides in the cell inner membrane. Part of the Sec protein translocase complex. Interacts with the SecYEG preprotein conducting channel. SecDF uses the proton motive force (PMF) to complete protein translocation after the ATP-dependent function of SecA. The sequence is that of Protein translocase subunit SecD from Dictyoglomus turgidum (strain DSM 6724 / Z-1310).